Reading from the N-terminus, the 377-residue chain is 4-hydroxy-3-methylbut-2-en-1-yl diphosphate synthase (flavodoxin) (377 aa).

Residues cysteine 270, cysteine 273, cysteine 305, and glutamate 312 each contribute to the [4Fe-4S] cluster site.

The protein belongs to the IspG family. The cofactor is [4Fe-4S] cluster.

The enzyme catalyses (2E)-4-hydroxy-3-methylbut-2-enyl diphosphate + oxidized [flavodoxin] + H2O + 2 H(+) = 2-C-methyl-D-erythritol 2,4-cyclic diphosphate + reduced [flavodoxin]. Its pathway is isoprenoid biosynthesis; isopentenyl diphosphate biosynthesis via DXP pathway; isopentenyl diphosphate from 1-deoxy-D-xylulose 5-phosphate: step 5/6. Functionally, converts 2C-methyl-D-erythritol 2,4-cyclodiphosphate (ME-2,4cPP) into 1-hydroxy-2-methyl-2-(E)-butenyl 4-diphosphate. This Bacillus subtilis (strain 168) protein is 4-hydroxy-3-methylbut-2-en-1-yl diphosphate synthase (flavodoxin).